A 425-amino-acid chain; its full sequence is Glutamyl-tRNA reductase (425 aa).

Substrate-binding positions include 49–52 (TCNR), Ser107, 112–114 (EPQ), and Gln118. The active-site Nucleophile is the Cys50. Residue 187–192 (GAGETI) participates in NADP(+) binding.

It belongs to the glutamyl-tRNA reductase family. In terms of assembly, homodimer.

It catalyses the reaction (S)-4-amino-5-oxopentanoate + tRNA(Glu) + NADP(+) = L-glutamyl-tRNA(Glu) + NADPH + H(+). It participates in porphyrin-containing compound metabolism; protoporphyrin-IX biosynthesis; 5-aminolevulinate from L-glutamyl-tRNA(Glu): step 1/2. Catalyzes the NADPH-dependent reduction of glutamyl-tRNA(Glu) to glutamate 1-semialdehyde (GSA). The protein is Glutamyl-tRNA reductase of Pseudomonas putida (strain GB-1).